The primary structure comprises 1004 residues: Bifunctional glutamine synthetase adenylyltransferase/adenylyl-removing enzyme (1004 aa).

The interval 1-496 (MVRPPSARSA…LHAKLFYRPL (496 aa)) is adenylyl removase. The segment at 502–1004 (RMDPDALRLS…RAVVERVFGS (503 aa)) is adenylyl transferase.

It belongs to the GlnE family. The cofactor is Mg(2+).

The enzyme catalyses [glutamine synthetase]-O(4)-(5'-adenylyl)-L-tyrosine + phosphate = [glutamine synthetase]-L-tyrosine + ADP. The catalysed reaction is [glutamine synthetase]-L-tyrosine + ATP = [glutamine synthetase]-O(4)-(5'-adenylyl)-L-tyrosine + diphosphate. In terms of biological role, involved in the regulation of glutamine synthetase GlnA, a key enzyme in the process to assimilate ammonia. When cellular nitrogen levels are high, the C-terminal adenylyl transferase (AT) inactivates GlnA by covalent transfer of an adenylyl group from ATP to specific tyrosine residue of GlnA, thus reducing its activity. Conversely, when nitrogen levels are low, the N-terminal adenylyl removase (AR) activates GlnA by removing the adenylyl group by phosphorolysis, increasing its activity. The regulatory region of GlnE binds the signal transduction protein PII (GlnB) which indicates the nitrogen status of the cell. The protein is Bifunctional glutamine synthetase adenylyltransferase/adenylyl-removing enzyme of Nocardia farcinica (strain IFM 10152).